The chain runs to 126 residues: Holo-[acyl-carrier-protein] synthase (126 aa).

Positions 9 and 58 each coordinate Mg(2+).

This sequence belongs to the P-Pant transferase superfamily. AcpS family. It depends on Mg(2+) as a cofactor.

The protein resides in the cytoplasm. The enzyme catalyses apo-[ACP] + CoA = holo-[ACP] + adenosine 3',5'-bisphosphate + H(+). Transfers the 4'-phosphopantetheine moiety from coenzyme A to a Ser of acyl-carrier-protein. This chain is Holo-[acyl-carrier-protein] synthase, found in Escherichia coli (strain K12 / MC4100 / BW2952).